Here is a 296-residue protein sequence, read N- to C-terminus: Putative peptide transport system permease protein BruAb2_1032 (296 aa).

The next 6 helical transmembrane spans lie at 35-55 (IGLVLLLIVVLAAVLAPWITN), 97-117 (LWIGLTVAVLSAILGAIIGIA), 131-151 (VMDALMAFPAILLAIGISAAL), 205-225 (ILPNCLAPLLVTLTFVFAYAI), 229-249 (ATLSFLGIGTPPPHASWGSIV), and 260-280 (WWIMLFPGIAITISALAINLI). An ABC transmembrane type-1 domain is found at 97–281 (LWIGLTVAVL…ISALAINLIG (185 aa)).

The protein belongs to the binding-protein-dependent transport system permease family. As to quaternary structure, the complex is composed of two ATP-binding proteins (BruAb2_1033 and BruAb2_1034), two transmembrane proteins (BruAb2_1031 and BruAb2_1032) and a solute-binding protein (BruAb2_1030).

The protein resides in the cell inner membrane. Its function is as follows. Probably part of an ABC transporter complex that could be involved in peptide import. Probably responsible for the translocation of the substrate across the membrane. The polypeptide is Putative peptide transport system permease protein BruAb2_1032 (Brucella abortus biovar 1 (strain 9-941)).